A 232-amino-acid polypeptide reads, in one-letter code: U-scoloptoxin(11)-Sa3a (232 aa).

A signal peptide spans 1 to 21 (MFQFCLLILLLAPGRFFSALG).

It belongs to the scoloptoxin-11 family. Contains 8 disulfide bonds. In terms of tissue distribution, expressed by the venom gland.

The protein localises to the secreted. The protein is U-scoloptoxin(11)-Sa3a of Scolopendra alternans (Florida Keys giant centipede).